The following is a 134-amino-acid chain: Ribosome-binding factor A (134 aa).

The protein belongs to the RbfA family. Monomer. Binds 30S ribosomal subunits, but not 50S ribosomal subunits or 70S ribosomes.

The protein resides in the cytoplasm. Its function is as follows. One of several proteins that assist in the late maturation steps of the functional core of the 30S ribosomal subunit. Associates with free 30S ribosomal subunits (but not with 30S subunits that are part of 70S ribosomes or polysomes). Required for efficient processing of 16S rRNA. May interact with the 5'-terminal helix region of 16S rRNA. This chain is Ribosome-binding factor A, found in Psychrobacter arcticus (strain DSM 17307 / VKM B-2377 / 273-4).